The primary structure comprises 639 residues: Extracellular metalloproteinase mep (639 aa).

Residues 1–16 form the signal peptide; sequence MHMLSFIGALALPVFV. Positions 17-245 are excised as a propeptide; sequence CAQSCEPASL…IHGVVDYISE (229 aa). Residues Asn-287, Asn-320, Asn-336, and Asn-368 are each glycosylated (N-linked (GlcNAc...) asparagine). His-429 contacts Zn(2+). Residue Glu-430 is part of the active site. Residue His-433 participates in Zn(2+) binding. Asn-509 carries N-linked (GlcNAc...) asparagine glycosylation.

It belongs to the peptidase M36 family. Zn(2+) serves as cofactor.

The protein localises to the secreted. Functionally, secreted metalloproteinase that allows assimilation of proteinaceous substrates. This is Extracellular metalloproteinase mep (mep) from Aspergillus flavus (strain ATCC 200026 / FGSC A1120 / IAM 13836 / NRRL 3357 / JCM 12722 / SRRC 167).